We begin with the raw amino-acid sequence, 358 residues long: Cytoplasmic dynein 2 light intermediate chain 1 (358 aa).

Disordered stretches follow at residues 1–35 (MPKVSSDTLWDIAAAEVRSRESRTDEEEAEEEDAH) and 307–358 (ESTR…ALDP). Over residues 24–33 (TDEEEAEEED) the composition is skewed to acidic residues. Composition is skewed to basic and acidic residues over residues 307–320 (ESTRERKELKDPVK) and 333–349 (RAQKDQELDQYKREQAK).

This sequence belongs to the dynein light intermediate chain family. Light intermediate chain of the cytoplasmic dynein complex 2, a multisubunit complex composed at least of eleven different proteins. The cytoplasmic dynein 2 complex consists of two catalytic heavy chains (HCs) and a number of non-catalytic subunits presented by intermediate chains (ICs), light intermediate chains (LICs) and light chains (LCs). Among them, a heavy chain (DYNC2H1), two intermediate chains (DYNC2I2 and DYNC2I1), a light intermediate chain (DYNC2LI1), and a light chain (DYNLT2B) are unique to the dynein-2 complex, but a subset of light chains are also shared by dynein-1 and dynein-2 complexes. Dynein-2 complex is built around two copies of cytoplasmic dynein 2 heavy chain 1 (DYNC2H1). The C-terminal region forms the motor domain, which converts the energy from ATP hydrolysis into movement. Its N-terminal region forms the tail, an extended structure that binds the other subunits and holds the two heavy chains in a homodimer.

It is found in the cytoplasm. Its subcellular location is the cell projection. It localises to the cilium. The protein resides in the cytoskeleton. The protein localises to the cilium basal body. It is found in the cilium axoneme. Its subcellular location is the microtubule organizing center. It localises to the centrosome. Its function is as follows. Acts as one of several non-catalytic accessory components of the cytoplasmic dynein 2 complex (dynein-2 complex), a motor protein complex that drives the movement of cargos along microtubules within cilia and flagella in concert with the intraflagellar transport (IFT) system, facilitating the assembly of these organelles. This chain is Cytoplasmic dynein 2 light intermediate chain 1 (dync2li1), found in Danio rerio (Zebrafish).